We begin with the raw amino-acid sequence, 174 residues long: Trypsin inhibitor BvTI (174 aa).

2 disulfide bridges follow: Cys-41–Cys-84 and Cys-131–Cys-138.

It belongs to the protease inhibitor I3 (leguminous Kunitz-type inhibitor) family.

It localises to the secreted. Functionally, inhibits bovine trypsin and chymotrypsin, and human plasmin, plasma kallikrein and factor XIIa. The sequence is that of Trypsin inhibitor BvTI from Bauhinia variegata (Purple orchid tree).